Consider the following 279-residue polypeptide: Ribosomal RNA large subunit methyltransferase E (279 aa).

Residues 1–10 (MSDDDQKPED) show a composition bias toward basic and acidic residues. A disordered region spans residues 1 to 66 (MSDDDQKPED…MKKGGDARAA (66 aa)). The S-adenosyl-L-methionine site is built by glycine 136, tryptophan 138, aspartate 154, aspartate 170, and aspartate 194. Lysine 234 (proton acceptor) is an active-site residue.

Belongs to the class I-like SAM-binding methyltransferase superfamily. RNA methyltransferase RlmE family.

The protein localises to the cytoplasm. It catalyses the reaction uridine(2552) in 23S rRNA + S-adenosyl-L-methionine = 2'-O-methyluridine(2552) in 23S rRNA + S-adenosyl-L-homocysteine + H(+). Its function is as follows. Specifically methylates the uridine in position 2552 of 23S rRNA at the 2'-O position of the ribose in the fully assembled 50S ribosomal subunit. This chain is Ribosomal RNA large subunit methyltransferase E, found in Maricaulis maris (strain MCS10) (Caulobacter maris).